A 150-amino-acid polypeptide reads, in one-letter code: Large ribosomal subunit protein bL9 (150 aa).

The protein belongs to the bacterial ribosomal protein bL9 family.

Functionally, binds to the 23S rRNA. The chain is Large ribosomal subunit protein bL9 from Baumannia cicadellinicola subsp. Homalodisca coagulata.